We begin with the raw amino-acid sequence, 342 residues long: N-acetyl-gamma-glutamyl-phosphate reductase (342 aa).

C148 is an active-site residue.

It belongs to the NAGSA dehydrogenase family. Type 1 subfamily.

The protein localises to the cytoplasm. It catalyses the reaction N-acetyl-L-glutamate 5-semialdehyde + phosphate + NADP(+) = N-acetyl-L-glutamyl 5-phosphate + NADPH + H(+). It participates in amino-acid biosynthesis; L-arginine biosynthesis; N(2)-acetyl-L-ornithine from L-glutamate: step 3/4. Catalyzes the NADPH-dependent reduction of N-acetyl-5-glutamyl phosphate to yield N-acetyl-L-glutamate 5-semialdehyde. This chain is N-acetyl-gamma-glutamyl-phosphate reductase, found in Methanococcus vannielii (strain ATCC 35089 / DSM 1224 / JCM 13029 / OCM 148 / SB).